We begin with the raw amino-acid sequence, 237 residues long: B3 domain-containing protein At1g20600 (237 aa).

The tract at residues 53-79 (LVSQANQKQSRKREEKTEKNQPKRVKN) is disordered. The segment covering 64-73 (KREEKTEKNQ) has biased composition (basic and acidic residues). Residues 126–230 (KKQLMSSDVD…LEHVFIRGSK (105 aa)) constitute a DNA-binding region (TF-B3).

Its subcellular location is the nucleus. The protein is B3 domain-containing protein At1g20600 of Arabidopsis thaliana (Mouse-ear cress).